The following is a 198-amino-acid chain: Nucleoid occlusion factor SlmA (198 aa).

The 62-residue stretch at 9–70 (RNRREEILQA…SLIEFIEDSL (62 aa)) folds into the HTH tetR-type domain. A DNA-binding region (H-T-H motif) is located at residues 33–52 (TTAKLAANVGVSEAALYRHF). Residues 119–144 (DRLQGRINQLYERIEVQLRQVLRERK) are a coiled coil.

Belongs to the nucleoid occlusion factor SlmA family. Homodimer. Interacts with FtsZ.

The protein resides in the cytoplasm. The protein localises to the nucleoid. Required for nucleoid occlusion (NO) phenomenon, which prevents Z-ring formation and cell division over the nucleoid. Acts as a DNA-associated cell division inhibitor that binds simultaneously chromosomal DNA and FtsZ, and disrupts the assembly of FtsZ polymers. SlmA-DNA-binding sequences (SBS) are dispersed on non-Ter regions of the chromosome, preventing FtsZ polymerization at these regions. The polypeptide is Nucleoid occlusion factor SlmA (Sodalis glossinidius (strain morsitans)).